The primary structure comprises 384 residues: 8-amino-7-oxononanoate synthase (384 aa).

R21 provides a ligand contact to substrate. Pyridoxal 5'-phosphate is bound at residue G108–F109. H133 serves as a coordination point for substrate. S179, H207, and T233 together coordinate pyridoxal 5'-phosphate. An N6-(pyridoxal phosphate)lysine modification is found at K236. T352 provides a ligand contact to substrate.

This sequence belongs to the class-II pyridoxal-phosphate-dependent aminotransferase family. BioF subfamily. As to quaternary structure, homodimer. Requires pyridoxal 5'-phosphate as cofactor.

It carries out the reaction 6-carboxyhexanoyl-[ACP] + L-alanine + H(+) = (8S)-8-amino-7-oxononanoate + holo-[ACP] + CO2. It functions in the pathway cofactor biosynthesis; biotin biosynthesis. Functionally, catalyzes the decarboxylative condensation of pimeloyl-[acyl-carrier protein] and L-alanine to produce 8-amino-7-oxononanoate (AON), [acyl-carrier protein], and carbon dioxide. The protein is 8-amino-7-oxononanoate synthase of Shigella sonnei (strain Ss046).